Consider the following 397-residue polypeptide: 3-hydroxy-3-methylglutaryl-coenzyme A reductase (397 aa).

Active-site charge relay system residues include Glu-96 and Asp-301. His-391 (proton donor) is an active-site residue.

The protein belongs to the HMG-CoA reductase family.

The enzyme catalyses (R)-mevalonate + 2 NADP(+) + CoA = (3S)-3-hydroxy-3-methylglutaryl-CoA + 2 NADPH + 2 H(+). It functions in the pathway metabolic intermediate biosynthesis; (R)-mevalonate biosynthesis; (R)-mevalonate from acetyl-CoA: step 3/3. Its function is as follows. Converts HMG-CoA to mevalonate. The protein is 3-hydroxy-3-methylglutaryl-coenzyme A reductase (hmgA) of Methanothermobacter thermautotrophicus (strain ATCC 29096 / DSM 1053 / JCM 10044 / NBRC 100330 / Delta H) (Methanobacterium thermoautotrophicum).